A 457-amino-acid chain; its full sequence is F-box only protein 13 (457 aa).

One can recognise an F-box domain in the interval 64 to 110; that stretch reads EFPMDDLNDDVLERVLSWLPTSCFFRMSSVCKRWKSSQTSKSFKLAC.

In Arabidopsis thaliana (Mouse-ear cress), this protein is F-box only protein 13 (FBX13).